The chain runs to 545 residues: Glucans biosynthesis protein G (545 aa).

The N-terminal stretch at 1 to 34 is a signal peptide; it reads MVSLLRCQSFKPSSSLICSLALSAAFALSSSAFA. The disordered stretch occupies residues 38 to 60; sequence KPAENKPATPVVSPPKATAQPAN.

It belongs to the OpgD/OpgG family.

It localises to the periplasm. It participates in glycan metabolism; osmoregulated periplasmic glucan (OPG) biosynthesis. Its function is as follows. Involved in the biosynthesis of osmoregulated periplasmic glucans (OPGs). In Shewanella sp. (strain MR-7), this protein is Glucans biosynthesis protein G.